Reading from the N-terminus, the 184-residue chain is Ribosome-recycling factor (184 aa).

The interval methionine 134 to isoleucine 167 is disordered.

This sequence belongs to the RRF family.

It localises to the cytoplasm. In terms of biological role, responsible for the release of ribosomes from messenger RNA at the termination of protein biosynthesis. May increase the efficiency of translation by recycling ribosomes from one round of translation to another. This Staphylococcus aureus (strain Mu3 / ATCC 700698) protein is Ribosome-recycling factor.